The chain runs to 83 residues: Consomatin Rs1 (83 aa).

A signal peptide spans 1-22 (MQTAYWVMVMMMVWITAPLSEG). The propeptide occupies 23 to 55 (GKLNNVIRGLVPDDVTPKRISQSLISRRRFDSR). Cysteine 62 and cysteine 67 are oxidised to a cystine. At tryptophan 64 the chain carries D-tryptophan. 4-hydroxyproline is present on proline 68. The propeptide occupies 71-83 (LHGDNYDLKEKDK).

This sequence belongs to the conotoxin C superfamily. Consomatin family. In terms of tissue distribution, expressed by the venom duct.

It is found in the secreted. In terms of biological role, moderately activates human somatostatin receptors (SSTR) with a preferential activation of SSTR1 and SSTR4. In vivo, does not cause behavioral changes in mice within a few minutes of intracranial injection, but causes a progressive loss of movement thereafter. Four to five hours after injection, mice recover, even with the highest dose tested. Shows antinociception and antihyperalgesia activities in two mouse models of acute pain, most probably by acting outside the central nervous system. This Conus raulsilvai (Sea snail) protein is Consomatin Rs1.